The chain runs to 456 residues: MALPIVAIIGRPNVGKSTLVNRLAGEQTAIVHDEPGVTRDRTYMPAFWNGREFLVVDTGGLVFNDDTEFLPLIRQQAMTALAEACAAIFVVDGQTGPTSADQEIAEWMRQQRVPVLLAVNKCESPDQGLMQAAEFWELGLGEPYPISAIHGSGTGELLDELVNHIPAVEDIPETNEIKVAIVGRPNVGKSSLLNAFVGEERAIVSPISGTTRDAIDTVIERDGQTYRLIDTAGIRKKKHIEYGTEFFSINRAFKAIRRADVVLLVLDAVDGVTEQDQKLAGRIIEEGRACIIVVNKWDAVEKDSYTIYDYEKTLQSRLHFTEWAETIFVSALSGQRVEKILELVKTAAESHKRRVSTSVINEVLTDAVSWHSPPASRGGRQGKIYYGTQVSSQPPTIALFVNDSKRFNDNYRRYIERQFRQQLGFKGTPIILLWRSKKVRDAEIGNVNRATRVKLS.

EngA-type G domains follow at residues 4–169 (PIVA…PAVE) and 177–352 (IKVA…ESHK). GTP-binding positions include 10–17 (GRPNVGKS), 57–61 (DTGGL), 120–123 (NKCE), 183–190 (GRPNVGKS), 230–234 (DTAGI), and 295–298 (NKWD). The region spanning 353–438 (RRVSTSVINE…PIILLWRSKK (86 aa)) is the KH-like domain.

It belongs to the TRAFAC class TrmE-Era-EngA-EngB-Septin-like GTPase superfamily. EngA (Der) GTPase family. As to quaternary structure, associates with the 50S ribosomal subunit.

Its function is as follows. GTPase that plays an essential role in the late steps of ribosome biogenesis. The sequence is that of GTPase Der from Nostoc punctiforme (strain ATCC 29133 / PCC 73102).